Reading from the N-terminus, the 20-residue chain is Antifungal protein (20 aa).

This sequence belongs to the protease inhibitor I3 (leguminous Kunitz-type inhibitor) family.

In terms of biological role, inhibits soybean trypsin. Has antifungal activity against R.cerealis, A.brassicae and A.niger, and weak antifungal activity against F.oxysporum. This Cullen corylifolium (Malaysian scurfpea) protein is Antifungal protein.